The sequence spans 512 residues: Putative ribose/galactose/methyl galactoside import ATP-binding protein 2 (512 aa).

2 consecutive ABC transporter domains span residues I14–Q251 and T262–E507. Position 46–53 (G46–S53) interacts with ATP.

This sequence belongs to the ABC transporter superfamily. Carbohydrate importer 2 (CUT2) (TC 3.A.1.2) family.

It localises to the cell inner membrane. The enzyme catalyses D-ribose(out) + ATP + H2O = D-ribose(in) + ADP + phosphate + H(+). It carries out the reaction D-galactose(out) + ATP + H2O = D-galactose(in) + ADP + phosphate + H(+). Functionally, part of an ABC transporter complex involved in carbohydrate import. Could be involved in ribose, galactose and/or methyl galactoside import. Responsible for energy coupling to the transport system. The chain is Putative ribose/galactose/methyl galactoside import ATP-binding protein 2 from Burkholderia cenocepacia (strain HI2424).